We begin with the raw amino-acid sequence, 82 residues long: Cytochrome c-551 (82 aa).

Positions 12, 15, 16, and 61 each coordinate heme c.

Post-translationally, binds 1 heme c group covalently per subunit.

In Azotobacter vinelandii, this protein is Cytochrome c-551.